Reading from the N-terminus, the 273-residue chain is HLA class II histocompatibility antigen, DO beta chain (273 aa).

The signal sequence occupies residues 1–26 (MGSGWVPWVVALLVNLTRLDSSMTQG). A beta-1 region spans residues 27–120 (TDSPEDFVIQ…LGAPFTVGRK (94 aa)). The Extracellular portion of the chain corresponds to 27–224 (TDSPEDFVIQ…RAQSEYSWRK (198 aa)). 2 cysteine pairs are disulfide-bonded: Cys41–Cys105 and Cys143–Cys199. N-linked (GlcNAc...) asparagine glycosylation occurs at Asn45. A beta-2 region spans residues 121–214 (VQPEVTVYPE…SLLSPVSVEW (94 aa)). The Ig-like C1-type domain occupies 123–213 (PEVTVYPERT…SSLLSPVSVE (91 aa)). A connecting peptide region spans residues 215-224 (RAQSEYSWRK). The chain crosses the membrane as a helical span at residues 225 to 245 (MLSGIAAFLLGLIFLLVGIVI). At 246-273 (QLRAQKGYVRTQMSGNEVSRAVLLPQSC) the chain is on the cytoplasmic side.

Belongs to the MHC class II family. In terms of assembly, heterodimer of an alpha chain (DOA) and a beta chain (DOB). Forms a heterotetrameric complex with an HLA-DM molecule during intracellular transport in endosomal/lysosomal compartments in B-cells.

It is found in the endosome membrane. The protein localises to the lysosome membrane. In terms of biological role, important modulator in the HLA class II restricted antigen presentation pathway by interaction with the HLA-DM molecule in B-cells. Modifies peptide exchange activity of HLA-DM. The polypeptide is HLA class II histocompatibility antigen, DO beta chain (HLA-DOB) (Homo sapiens (Human)).